Reading from the N-terminus, the 246-residue chain is tRNA pseudouridine synthase A (246 aa).

Asp52 (nucleophile) is an active-site residue. Position 111 (Tyr111) interacts with substrate.

Belongs to the tRNA pseudouridine synthase TruA family. Homodimer.

It catalyses the reaction uridine(38/39/40) in tRNA = pseudouridine(38/39/40) in tRNA. In terms of biological role, formation of pseudouridine at positions 38, 39 and 40 in the anticodon stem and loop of transfer RNAs. In Fervidobacterium nodosum (strain ATCC 35602 / DSM 5306 / Rt17-B1), this protein is tRNA pseudouridine synthase A.